We begin with the raw amino-acid sequence, 143 residues long: Peptide methionine sulfoxide reductase MsrB (143 aa).

One can recognise a MsrB domain in the interval 5 to 127 (KEKRLKELNR…NSAALKFIPK (123 aa)). The active-site Nucleophile is Cys-116.

This sequence belongs to the MsrB Met sulfoxide reductase family.

The catalysed reaction is L-methionyl-[protein] + [thioredoxin]-disulfide + H2O = L-methionyl-(R)-S-oxide-[protein] + [thioredoxin]-dithiol. In Bacillus pumilus (strain SAFR-032), this protein is Peptide methionine sulfoxide reductase MsrB.